Reading from the N-terminus, the 371-residue chain is Thyroid transcription factor 1 (371 aa).

Positions 161-220 form a DNA-binding region, homeobox; sequence RRKRRVLFSQAQVYELERRFKQQKYLSAPEREHLASMIHLTPTQVKIWFQNHRYKMKRQA. Disordered stretches follow at residues 219-294 and 308-342; these read QAKD…QQQA and SGGP…ALQG. Residues 233–243 show a composition bias toward gly residues; the sequence is SGGGGGGGGAG. Low complexity-rich tracts occupy residues 244–253 and 272–294; these read CPQQQQAQQQ and AGAP…QQQA.

The protein belongs to the NK-2 homeobox family. In terms of processing, phosphorylated on serine residues. Thyroid, lung and CNS.

The protein resides in the nucleus. Transcription factor that binds and activates the promoter of thyroid specific genes such as thyroglobulin, thyroperoxidase, and thyrotropin receptor. Crucial in the maintenance of the thyroid differentiation phenotype. May play a role in lung development and surfactant homeostasis. The chain is Thyroid transcription factor 1 (TITF1) from Canis lupus familiaris (Dog).